The primary structure comprises 604 residues: Kelch-like protein 15 (604 aa).

Positions 31–98 (LDVTLVIEDH…MYYGTIELSM (68 aa)) constitute a BTB domain. Positions 133 to 237 (CAEIMRLLDD…TPTSVFEKVK (105 aa)) constitute a BACK domain. Kelch repeat units follow at residues 328-379 (FVFL…VIGK), 381-426 (IYAV…VLNN), 428-473 (LFIT…NKSK), 489-542 (KLYV…VLDK), and 544-590 (IMVL…VCNL).

In terms of assembly, homodimer. Dimerization does not affect PPP2R5B-binding, but is required for its proteasomal degradation. Interacts with CUL3. Directly interacts with PPP2R5B; this interaction leads to PPP2R5B proteasomal degradation. Interacts with RBBP8/CtIP; this interaction leads to RBBP8 proteasomal degradation. Interacts with PACMP micropeptide; interaction prevents ubiquitination and degradation of RBBP8/CtIP.

It is found in the nucleus. The protein operates within protein modification; protein ubiquitination. Its function is as follows. Substrate-specific adapter for CUL3 E3 ubiquitin-protein ligase complex. Acts as an adapter for CUL3 to target the serine/threonine-protein phosphatase 2A (PP2A) subunit PPP2R5B for ubiquitination and subsequent proteasomal degradation, thus promoting exchange with other regulatory subunits. Acts as an adapter for CUL3 to target the DNA-end resection factor RBBP8/CtIP for ubiquitination and subsequent proteasomal degradation. Through the regulation of RBBP8/CtIP protein turnover, plays a key role in DNA damage response, favoring DNA double-strand repair through error-prone non-homologous end joining (NHEJ) over error-free, RBBP8-mediated homologous recombination (HR). The sequence is that of Kelch-like protein 15 (KLHL15) from Homo sapiens (Human).